Reading from the N-terminus, the 110-residue chain is UPF0060 membrane protein Haur_1798 (110 aa).

Transmembrane regions (helical) follow at residues 7 to 27 (VVLFILAGLAEIAGGYLVWQW), 33 to 53 (SIWFGVLGAILLVGYGFLPTL), 63 to 83 (VYAAYGGVFIVLSLAWGWLID), and 89 to 109 (QPSLVGACLALVGAAIILYWP).

It belongs to the UPF0060 family.

The protein resides in the cell membrane. This is UPF0060 membrane protein Haur_1798 from Herpetosiphon aurantiacus (strain ATCC 23779 / DSM 785 / 114-95).